The primary structure comprises 664 residues: Transketolase 1 (664 aa).

Residue His26 participates in substrate binding. Thiamine diphosphate-binding positions include His66 and 114 to 116 (GPL). Asp155 provides a ligand contact to Mg(2+). Thiamine diphosphate contacts are provided by Gly156 and Asn185. Mg(2+) contacts are provided by Asn185 and Ile187. Substrate contacts are provided by His260, Arg357, and Ser384. His260 contacts thiamine diphosphate. Glu411 serves as the catalytic Proton donor. Phe437 is a binding site for thiamine diphosphate. The substrate site is built by His461, Asp469, and Arg520.

It belongs to the transketolase family. As to quaternary structure, homodimer. Requires Mg(2+) as cofactor. The cofactor is Ca(2+). It depends on Mn(2+) as a cofactor. Co(2+) is required as a cofactor. Thiamine diphosphate serves as cofactor.

It carries out the reaction D-sedoheptulose 7-phosphate + D-glyceraldehyde 3-phosphate = aldehydo-D-ribose 5-phosphate + D-xylulose 5-phosphate. Functionally, catalyzes the transfer of a two-carbon ketol group from a ketose donor to an aldose acceptor, via a covalent intermediate with the cofactor thiamine pyrophosphate. The chain is Transketolase 1 (tkt1) from Vibrio vulnificus (strain YJ016).